A 402-amino-acid polypeptide reads, in one-letter code: Cysteine protease atg4 (402 aa).

A disordered region spans residues 46 to 68; the sequence is ETADESRNPDHGQQQNTNTSAPG. Polar residues predominate over residues 56 to 66; that stretch reads HGQQQNTNTSA. Cysteine 128 acts as the Nucleophile in catalysis. Residues aspartate 302 and histidine 304 contribute to the active site.

Belongs to the peptidase C54 family.

Its subcellular location is the cytoplasm. It is found in the nucleus. It localises to the preautophagosomal structure. It catalyses the reaction [protein]-C-terminal L-amino acid-glycyl-phosphatidylethanolamide + H2O = [protein]-C-terminal L-amino acid-glycine + a 1,2-diacyl-sn-glycero-3-phosphoethanolamine. Functionally, cysteine protease that plays a key role in cytoplasm to vacuole transport (Cvt) and autophagy by mediating both proteolytic activation and delipidation of ATG8. Required for selective autophagic degradation of the nucleus (nucleophagy) as well as for mitophagy which contributes to regulate mitochondrial quantity and quality by eliminating the mitochondria to a basal level to fulfill cellular energy requirements and preventing excess ROS production. The protease activity is required for proteolytic activation of ATG8: cleaves the C-terminal amino acid of ATG8 to reveal a C-terminal glycine. ATG8 ubiquitin-like activity requires the exposure of the glycine at the C-terminus for its conjugation to phosphatidylethanolamine (PE) and its insertion to membranes, which is necessary for autophagy. The ATG8-PE conjugate mediates tethering between adjacent membranes and stimulates membrane hemifusion, leading to expansion of the autophagosomal membrane during autophagy. In addition to the protease activity, also catalyzes deconjugation of PE-conjugated forms of ATG8 during macroautophagy: ATG8 delipidation is required to release the protein from membranes, which facilitates multiple events during macroautophagy, and especially for efficient autophagosome biogenesis, the assembly of ATG9-containing tubulovesicular clusters into phagophores/autophagosomes, and for the disassembly of PAS-associated ATG components. ATG8 delipidation by ATG4 also recycles ATG8-PE generated on inappropriate membranes to maintain a reservoir of unlipidated ATG8 that is required for autophagosome formation at the PAS. In Emericella nidulans (strain FGSC A4 / ATCC 38163 / CBS 112.46 / NRRL 194 / M139) (Aspergillus nidulans), this protein is Cysteine protease atg4 (atg4).